The sequence spans 347 residues: NADH-ubiquinone oxidoreductase chain 2 (347 aa).

The next 11 helical transmembrane spans lie at 3 to 23 (PMTS…VLMS), 25 to 45 (HWFM…PILM), 59 to 79 (YFLT…INLM), 96 to 116 (TLIT…FWVP), 122 to 142 (VSLS…LSLL), 149 to 169 (INTN…GWGG), 178 to 198 (IMAY…IYNP), 200 to 220 (LSLL…MLLI), 240 to 260 (ITTM…LTGF), 274 to 294 (NSVI…FFYM), and 326 to 346 (MTML…FISL).

The protein belongs to the complex I subunit 2 family. As to quaternary structure, core subunit of respiratory chain NADH dehydrogenase (Complex I) which is composed of 45 different subunits. Interacts with TMEM242.

It localises to the mitochondrion inner membrane. It carries out the reaction a ubiquinone + NADH + 5 H(+)(in) = a ubiquinol + NAD(+) + 4 H(+)(out). Core subunit of the mitochondrial membrane respiratory chain NADH dehydrogenase (Complex I) which catalyzes electron transfer from NADH through the respiratory chain, using ubiquinone as an electron acceptor. Essential for the catalytic activity and assembly of complex I. The polypeptide is NADH-ubiquinone oxidoreductase chain 2 (Sylvisorex granti (Grant's forest shrew)).